Consider the following 335-residue polypeptide: Tetraacyldisaccharide 4'-kinase (335 aa).

58–65 (TMGGAGKT) is an ATP binding site.

It belongs to the LpxK family.

The enzyme catalyses a lipid A disaccharide + ATP = a lipid IVA + ADP + H(+). Its pathway is glycolipid biosynthesis; lipid IV(A) biosynthesis; lipid IV(A) from (3R)-3-hydroxytetradecanoyl-[acyl-carrier-protein] and UDP-N-acetyl-alpha-D-glucosamine: step 6/6. Its function is as follows. Transfers the gamma-phosphate of ATP to the 4'-position of a tetraacyldisaccharide 1-phosphate intermediate (termed DS-1-P) to form tetraacyldisaccharide 1,4'-bis-phosphate (lipid IVA). This Caulobacter vibrioides (strain ATCC 19089 / CIP 103742 / CB 15) (Caulobacter crescentus) protein is Tetraacyldisaccharide 4'-kinase.